The sequence spans 513 residues: Fumarate reductase (513 aa).

41 to 55 lines the FAD pocket; the sequence is AIVIGGGLAGLSATN. A Phosphoserine modification is found at S100. Active-site residues include H288 and R311.

The protein belongs to the FAD-dependent oxidoreductase 2 family. FRD/SDH subfamily. Requires FAD as cofactor.

Its subcellular location is the cytoplasm. The protein resides in the mitochondrion. It is found in the nucleus. It catalyses the reaction succinate + NAD(+) = fumarate + NADH + H(+). Irreversibly catalyzes the reduction of fumarate to succinate. The chain is Fumarate reductase (osm1) from Schizosaccharomyces pombe (strain 972 / ATCC 24843) (Fission yeast).